We begin with the raw amino-acid sequence, 236 residues long: 15,16-dihydrobiliverdin:ferredoxin oxidoreductase (236 aa).

The protein belongs to the HY2 family.

The enzyme catalyses 15,16-dihydrobiliverdin + oxidized 2[4Fe-4S]-[ferredoxin] = biliverdin IXalpha + reduced 2[4Fe-4S]-[ferredoxin] + 2 H(+). Catalyzes the two-electron reduction of biliverdin IX-alpha at the C15 methine bridge. This is 15,16-dihydrobiliverdin:ferredoxin oxidoreductase from Prochlorococcus marinus (strain MIT 9215).